Reading from the N-terminus, the 304-residue chain is Quinolinate synthase (304 aa).

Iminosuccinate is bound by residues His24 and Ser41. Residue Cys86 coordinates [4Fe-4S] cluster. Iminosuccinate is bound by residues 112 to 114 (YVN) and Ser129. Cys171 is a binding site for [4Fe-4S] cluster. Residues 197 to 199 (HPE) and Thr214 each bind iminosuccinate. Cys259 contacts [4Fe-4S] cluster.

It belongs to the quinolinate synthase family. Type 2 subfamily. [4Fe-4S] cluster serves as cofactor.

The protein resides in the cytoplasm. The catalysed reaction is iminosuccinate + dihydroxyacetone phosphate = quinolinate + phosphate + 2 H2O + H(+). It participates in cofactor biosynthesis; NAD(+) biosynthesis; quinolinate from iminoaspartate: step 1/1. Its function is as follows. Catalyzes the condensation of iminoaspartate with dihydroxyacetone phosphate to form quinolinate. The polypeptide is Quinolinate synthase (Geotalea uraniireducens (strain Rf4) (Geobacter uraniireducens)).